Consider the following 194-residue polypeptide: ATP-dependent Clp protease proteolytic subunit (194 aa).

Ser98 serves as the catalytic Nucleophile. Residue His123 is part of the active site.

The protein belongs to the peptidase S14 family. Fourteen ClpP subunits assemble into 2 heptameric rings which stack back to back to give a disk-like structure with a central cavity, resembling the structure of eukaryotic proteasomes.

The protein resides in the cytoplasm. It carries out the reaction Hydrolysis of proteins to small peptides in the presence of ATP and magnesium. alpha-casein is the usual test substrate. In the absence of ATP, only oligopeptides shorter than five residues are hydrolyzed (such as succinyl-Leu-Tyr-|-NHMec, and Leu-Tyr-Leu-|-Tyr-Trp, in which cleavage of the -Tyr-|-Leu- and -Tyr-|-Trp bonds also occurs).. Functionally, cleaves peptides in various proteins in a process that requires ATP hydrolysis. Has a chymotrypsin-like activity. Plays a major role in the degradation of misfolded proteins. This is ATP-dependent Clp protease proteolytic subunit from Acetivibrio thermocellus (strain ATCC 27405 / DSM 1237 / JCM 9322 / NBRC 103400 / NCIMB 10682 / NRRL B-4536 / VPI 7372) (Clostridium thermocellum).